The primary structure comprises 205 residues: Ribosomal RNA small subunit methyltransferase G (205 aa).

S-adenosyl-L-methionine is bound by residues Gly-73, Leu-78, 124–125 (VE), and Arg-138.

The protein belongs to the methyltransferase superfamily. RNA methyltransferase RsmG family.

Its subcellular location is the cytoplasm. The catalysed reaction is guanosine(527) in 16S rRNA + S-adenosyl-L-methionine = N(7)-methylguanosine(527) in 16S rRNA + S-adenosyl-L-homocysteine. In terms of biological role, specifically methylates the N7 position of guanine in position 527 of 16S rRNA. This is Ribosomal RNA small subunit methyltransferase G from Actinobacillus pleuropneumoniae serotype 5b (strain L20).